Reading from the N-terminus, the 740-residue chain is DNA (cytosine-5)-methyltransferase 3C (740 aa).

Disordered stretches follow at residues 75 to 99 and 248 to 312; these read LTGD…PVMP and FKPT…DVTN. The 133-residue stretch at 309–441 folds into the ADD domain; that stretch reads DVTNNKGNLE…LQDFFTTDPD (133 aa). Residues 320–350 form a GATA-type; atypical zinc finger; it reads HCLSCGRKDPVSFHPLFEGGLCQSCRDRFLE. Residues 361–417 form a PHD-type; atypical zinc finger; the sequence is QSYCTVCCEGRELLLCSNTSCCRCFCVECLEVLVGAGTAEDVKLQEPWSCYMCLPQR. One can recognise an SAM-dependent MTase C5-type domain in the interval 462–740; it reads IRVLSLFDGI…APLKDHFACE (279 aa). Residues isoleucine 471, threonine 473, glutamate 492, aspartate 514, and isoleucine 515 each contribute to the S-adenosyl-L-methionine site. The active site involves cysteine 538. 2 residues coordinate S-adenosyl-L-methionine: arginine 719 and tryptophan 721.

Belongs to the class I-like SAM-binding methyltransferase superfamily. C5-methyltransferase family. In terms of assembly, homodimer. Interacts with DNMT3L. Interacts with SPOCD1; recruiting Dnmt3C to transposons. In terms of tissue distribution, specifically expressed in testis.

It is found in the nucleus. The enzyme catalyses a 2'-deoxycytidine in DNA + S-adenosyl-L-methionine = a 5-methyl-2'-deoxycytidine in DNA + S-adenosyl-L-homocysteine + H(+). Functionally, DNA methyltransferase that specifically methylates the promoters of evolutionarily young retrotransposons in the male germline. De novo methylation and subsequent repression of transposable elements prevents their mobilization, which is essential for germline integrity. Compared to Dnmt3a and Dnmt3b, shows lower DNA methyltransferase efficiency. This chain is DNA (cytosine-5)-methyltransferase 3C, found in Mus musculus (Mouse).